The following is an 847-amino-acid chain: uncharacterized protein (847 aa).

The segment covering 116-126 (TGSSELTTSKT) has biased composition (polar residues). 3 disordered regions span residues 116 to 153 (TGSSELTTSKTPIDVDTKEQENRLKQKAEAAPKSTPIE), 208 to 245 (LKNFEDKSPPQAENASSSKKDEPISVECTDETSSRLSP), and 361 to 392 (DLEKNKESSSASLSTNKLAESPTEADKNSNVI). Positions 128–145 (IDVDTKEQENRLKQKAEA) are enriched in basic and acidic residues. Positions 368 to 378 (SSSASLSTNKL) are enriched in polar residues.

This is an uncharacterized protein from Caenorhabditis elegans.